A 1072-amino-acid chain; its full sequence is Carbamoyl phosphate synthase large chain (1072 aa).

A carboxyphosphate synthetic domain region spans residues 1–401 (MPKRLDINTI…SLLKAVRSLE (401 aa)). The ATP site is built by R129, R169, G175, G176, K208, I210, E215, G241, V242, H243, Q284, and E298. The 195-residue stretch at 133–327 (RTLMQDLNEP…IAKLAAKIAV (195 aa)) folds into the ATP-grasp 1 domain. Q284, E298, and N300 together coordinate Mg(2+). 3 residues coordinate Mn(2+): Q284, E298, and N300. Residues 402 to 546 (LGIYHLELDH…YSTYADENES (145 aa)) form an oligomerization domain region. Residues 547–929 (IVTDRKSVVV…ALYKGLVASG (383 aa)) are carbamoyl phosphate synthetic domain. Residues 671 to 861 (EAALTKLGIP…MANVATKVIL (191 aa)) form the ATP-grasp 2 domain. ATP-binding residues include R707, R746, E752, G777, V778, H779, S780, Q820, and E832. Mg(2+)-binding residues include Q820, E832, and N834. Q820, E832, and N834 together coordinate Mn(2+). One can recognise an MGS-like domain in the interval 930–1072 (INIPTHGSVI…QTKRHEVVHA (143 aa)). Positions 930–1072 (INIPTHGSVI…QTKRHEVVHA (143 aa)) are allosteric domain.

The protein belongs to the CarB family. As to quaternary structure, composed of two chains; the small (or glutamine) chain promotes the hydrolysis of glutamine to ammonia, which is used by the large (or ammonia) chain to synthesize carbamoyl phosphate. Tetramer of heterodimers (alpha,beta)4. Mg(2+) serves as cofactor. The cofactor is Mn(2+).

It catalyses the reaction hydrogencarbonate + L-glutamine + 2 ATP + H2O = carbamoyl phosphate + L-glutamate + 2 ADP + phosphate + 2 H(+). The enzyme catalyses hydrogencarbonate + NH4(+) + 2 ATP = carbamoyl phosphate + 2 ADP + phosphate + 2 H(+). It participates in amino-acid biosynthesis; L-arginine biosynthesis; carbamoyl phosphate from bicarbonate: step 1/1. It functions in the pathway pyrimidine metabolism; UMP biosynthesis via de novo pathway; (S)-dihydroorotate from bicarbonate: step 1/3. In terms of biological role, large subunit of the glutamine-dependent carbamoyl phosphate synthetase (CPSase). CPSase catalyzes the formation of carbamoyl phosphate from the ammonia moiety of glutamine, carbonate, and phosphate donated by ATP, constituting the first step of 2 biosynthetic pathways, one leading to arginine and/or urea and the other to pyrimidine nucleotides. The large subunit (synthetase) binds the substrates ammonia (free or transferred from glutamine from the small subunit), hydrogencarbonate and ATP and carries out an ATP-coupled ligase reaction, activating hydrogencarbonate by forming carboxy phosphate which reacts with ammonia to form carbamoyl phosphate. This Bacillus cereus (strain ATCC 14579 / DSM 31 / CCUG 7414 / JCM 2152 / NBRC 15305 / NCIMB 9373 / NCTC 2599 / NRRL B-3711) protein is Carbamoyl phosphate synthase large chain.